The chain runs to 104 residues: Large ribosomal subunit protein uL24 (104 aa).

The protein belongs to the universal ribosomal protein uL24 family. Part of the 50S ribosomal subunit.

One of two assembly initiator proteins, it binds directly to the 5'-end of the 23S rRNA, where it nucleates assembly of the 50S subunit. Its function is as follows. One of the proteins that surrounds the polypeptide exit tunnel on the outside of the subunit. In Corynebacterium aurimucosum (strain ATCC 700975 / DSM 44827 / CIP 107346 / CN-1) (Corynebacterium nigricans), this protein is Large ribosomal subunit protein uL24.